We begin with the raw amino-acid sequence, 386 residues long: Ribosomal RNA small subunit methyltransferase H (386 aa).

Residues 97–99 (GGH), Asp116, Tyr143, Asp167, and Gln174 each bind S-adenosyl-L-methionine.

Belongs to the methyltransferase superfamily. RsmH family.

The protein resides in the cytoplasm. The catalysed reaction is cytidine(1402) in 16S rRNA + S-adenosyl-L-methionine = N(4)-methylcytidine(1402) in 16S rRNA + S-adenosyl-L-homocysteine + H(+). Its function is as follows. Specifically methylates the N4 position of cytidine in position 1402 (C1402) of 16S rRNA. The polypeptide is Ribosomal RNA small subunit methyltransferase H (Mycolicibacterium paratuberculosis (strain ATCC BAA-968 / K-10) (Mycobacterium paratuberculosis)).